The primary structure comprises 433 residues: G2/mitotic-specific cyclin-B1 (433 aa).

The disordered stretch occupies residues 19 to 47 (INMAGAKRVPTAPAATSKPGLRPRTALGD). Lys-73 is modified (N6-acetyllysine). The interval 93-116 (PVSEPVPEPEPEPEPEPVKEEKLS) is disordered. Residue Ser-126 is modified to Phosphoserine; by CDK1. Ser-128 carries the phosphoserine modification. Ser-133 is modified (phosphoserine; by PLK1). Ser-147 is modified (phosphoserine). Interaction with CDK2 regions lie at residues 169–177 (EYVKDIYAY) and 258–261 (YEEM). At Thr-321 the chain carries Phosphothreonine.

It belongs to the cyclin family. Cyclin AB subfamily. As to quaternary structure, interacts with the CDC2 protein kinase to form a serine/threonine kinase holoenzyme complex also known as maturation promoting factor (MPF). The cyclin subunit imparts substrate specificity to the complex. Binds HEI10. Interacts with catalytically active RALBP1 and CDC2 during mitosis to form an endocytotic complex during interphase. Interacts with CCNF; interaction is required for nuclear localization. Interacts with CDK5RAP3. Interacts with RFPL4A and UBE2A. Interacts with INCA1. Ubiquitinated by the SCF(NIPA) complex during interphase, leading to its destruction. Deubiquitinated by USP22 during G2/M phase. Post-translationally, phosphorylated by PLK1 at Ser-133 on centrosomes during prophase: phosphorylation by PLK1 does not cause nuclear import. Phosphorylation at Ser-147 was also reported to be mediated by PLK1 but Ser-133 seems to be the primary phosphorylation site.

Its subcellular location is the cytoplasm. The protein resides in the nucleus. It localises to the cytoskeleton. The protein localises to the microtubule organizing center. It is found in the centrosome. In terms of biological role, essential for the control of the cell cycle at the G2/M (mitosis) transition. The protein is G2/mitotic-specific cyclin-B1 (CCNB1) of Homo sapiens (Human).